The primary structure comprises 421 residues: UPF0415 protein C7orf25 homolog (421 aa).

It belongs to the UPF0415 family.

In Rattus norvegicus (Rat), this protein is UPF0415 protein C7orf25 homolog.